A 460-amino-acid polypeptide reads, in one-letter code: ATP synthase subunit beta (460 aa).

An ATP-binding site is contributed by 148–155; that stretch reads GGAGVGKT.

It belongs to the ATPase alpha/beta chains family. In terms of assembly, F-type ATPases have 2 components, CF(1) - the catalytic core - and CF(0) - the membrane proton channel. CF(1) has five subunits: alpha(3), beta(3), gamma(1), delta(1), epsilon(1). CF(0) has three main subunits: a(1), b(2) and c(9-12). The alpha and beta chains form an alternating ring which encloses part of the gamma chain. CF(1) is attached to CF(0) by a central stalk formed by the gamma and epsilon chains, while a peripheral stalk is formed by the delta and b chains.

It is found in the cell inner membrane. It carries out the reaction ATP + H2O + 4 H(+)(in) = ADP + phosphate + 5 H(+)(out). Produces ATP from ADP in the presence of a proton gradient across the membrane. The catalytic sites are hosted primarily by the beta subunits. The polypeptide is ATP synthase subunit beta (Alcanivorax borkumensis (strain ATCC 700651 / DSM 11573 / NCIMB 13689 / SK2)).